The chain runs to 968 residues: RNA polymerase-associated protein RapA (968 aa).

The Helicase ATP-binding domain maps to 164 to 334 (DVGRRHAPRV…FARLRLLDPN (171 aa)). Residue 177–184 (DEVGLGKT) coordinates ATP. A DEAH box motif is present at residues 280 to 283 (DEAH). Residues 490 to 662 (RVEWLMGYLT…YLASPDETEG (173 aa)) enclose the Helicase C-terminal domain.

It belongs to the SNF2/RAD54 helicase family. RapA subfamily. As to quaternary structure, interacts with the RNAP. Has a higher affinity for the core RNAP than for the holoenzyme. Its ATPase activity is stimulated by binding to RNAP.

In terms of biological role, transcription regulator that activates transcription by stimulating RNA polymerase (RNAP) recycling in case of stress conditions such as supercoiled DNA or high salt concentrations. Probably acts by releasing the RNAP, when it is trapped or immobilized on tightly supercoiled DNA. Does not activate transcription on linear DNA. Probably not involved in DNA repair. The polypeptide is RNA polymerase-associated protein RapA (Escherichia coli O81 (strain ED1a)).